The chain runs to 111 residues: Large ribosomal subunit protein P1 (111 aa).

Positions 84–111 are disordered; the sequence is PAEAAAAEEKKEEEKEESDEDMGFGLFD.

The protein belongs to the eukaryotic ribosomal protein P1/P2 family. In terms of assembly, P1 and P2 exist as dimers at the large ribosomal subunit. Phosphorylated.

Functionally, plays an important role in the elongation step of protein synthesis. This chain is Large ribosomal subunit protein P1, found in Aspergillus fumigatus (strain ATCC MYA-4609 / CBS 101355 / FGSC A1100 / Af293) (Neosartorya fumigata).